Here is a 161-residue protein sequence, read N- to C-terminus: Phosphopantetheine adenylyltransferase (161 aa).

Substrate is bound at residue Thr-9. Residues 9–10 and His-17 contribute to the ATP site; that span reads TF. Residues Lys-41, Leu-73, and Arg-87 each coordinate substrate. ATP contacts are provided by residues 88–90, Glu-98, and 123–129; these read GLR and YQFISGT.

It belongs to the bacterial CoaD family. As to quaternary structure, homohexamer. The cofactor is Mg(2+).

Its subcellular location is the cytoplasm. The enzyme catalyses (R)-4'-phosphopantetheine + ATP + H(+) = 3'-dephospho-CoA + diphosphate. It participates in cofactor biosynthesis; coenzyme A biosynthesis; CoA from (R)-pantothenate: step 4/5. Its function is as follows. Reversibly transfers an adenylyl group from ATP to 4'-phosphopantetheine, yielding dephospho-CoA (dPCoA) and pyrophosphate. This chain is Phosphopantetheine adenylyltransferase, found in Janthinobacterium sp. (strain Marseille) (Minibacterium massiliensis).